The sequence spans 103 residues: Large ribosomal subunit protein bL21 (103 aa).

The protein belongs to the bacterial ribosomal protein bL21 family. In terms of assembly, part of the 50S ribosomal subunit. Contacts protein L20.

In terms of biological role, this protein binds to 23S rRNA in the presence of protein L20. The protein is Large ribosomal subunit protein bL21 of Shewanella sp. (strain ANA-3).